Reading from the N-terminus, the 150-residue chain is Truncated transcription factor CAULIFLOWER A (150 aa).

Residues 1 to 61 enclose the MADS-box domain; it reads MGRGRVEMKR…GKLFEYSSES (61 aa). The region spanning 90-150 is the K-box; partial domain; the sequence is QTNWSMEYSR…IRSRKNQLMH (61 aa).

In terms of assembly, homodimer capable of binding to CArG-box sequences. In terms of tissue distribution, expressed in some of the meristems of arrest-stage cauliflower heads.

The protein resides in the nucleus. Probable transcription factor that promotes early floral meristem identity in synergy with APETALA1, FRUITFULL and LEAFY. Is required subsequently for the transition of an inflorescence meristem into a floral meristem. Seems to be partially redundant to the function of APETALA1. The sequence is that of Truncated transcription factor CAULIFLOWER A (CAL-A) from Brassica oleracea var. botrytis (Cauliflower).